The primary structure comprises 311 residues: HTH-type transcriptional regulator DsdC (311 aa).

The HTH lysR-type domain maps to 15-72 (WQLSKMHTFEVAARHQSFALAAEELSLSPSAVSHRINQLEEELGIQLFVRSHRKVELT). A DNA-binding region (H-T-H motif) is located at residues 32–51 (FALAAEELSLSPSAVSHRIN).

This sequence belongs to the LysR transcriptional regulatory family.

Its function is as follows. Regulates the expression of the dsdX-dsdA operon. The chain is HTH-type transcriptional regulator DsdC from Escherichia coli (strain K12).